A 179-amino-acid chain; its full sequence is Large ribosomal subunit protein uL5 (179 aa).

In terms of assembly, contacts the P site tRNA. Forms a bridge to the 30S subunit in the 70S ribosome. Part of the 50S ribosomal subunit. Part of the 5S rRNA/L5/L18 subcomplex; in this organism only 2 proteins, L5 and L18 have been shown to be part of the 5S rRNA subcomplex, unlike E.coli and T.thermophilus where L25 (TL5) is also found. Has been shown to bind 5S rRNA.

In terms of biological role, this is one of the proteins that bind and probably mediate the attachment of the 5S RNA into the large ribosomal subunit, where it forms part of the central protuberance. In the 70S ribosome it contacts protein S13 of the 30S subunit (bridge B1b), connecting the 2 subunits; this bridge is implicated in subunit movement. Contacts the P site tRNA; the 5S rRNA and some of its associated proteins might help stabilize positioning of ribosome-bound tRNAs. This is Large ribosomal subunit protein uL5 (rplE) from Geobacillus stearothermophilus (Bacillus stearothermophilus).